Here is a 117-residue protein sequence, read N- to C-terminus: Large ribosomal subunit protein bL20c (117 aa).

The protein belongs to the bacterial ribosomal protein bL20 family.

Its subcellular location is the plastid. The protein resides in the chloroplast. Its function is as follows. Binds directly to 23S ribosomal RNA and is necessary for the in vitro assembly process of the 50S ribosomal subunit. It is not involved in the protein synthesizing functions of that subunit. The sequence is that of Large ribosomal subunit protein bL20c from Buxus microphylla (Littleleaf boxwood).